The chain runs to 71 residues: UPF0499 protein ACLA_083080 (71 aa).

Residues 1 to 18 (MKFLNILTLAFITGMASA) form the signal peptide. Disulfide bonds link Cys-44–Cys-58, Cys-48–Cys-61, and Cys-54–Cys-68.

Belongs to the UPF0499 family.

Its subcellular location is the secreted. The sequence is that of UPF0499 protein ACLA_083080 from Aspergillus clavatus (strain ATCC 1007 / CBS 513.65 / DSM 816 / NCTC 3887 / NRRL 1 / QM 1276 / 107).